The sequence spans 262 residues: Beta-phosphoglucomutase (262 aa).

Asp-29 (nucleophile) is an active-site residue. Mg(2+) is bound by residues Asp-29 and Asp-31. Asp-29 carries the post-translational modification 4-aspartylphosphate. Asp-31 (proton donor/acceptor) is an active-site residue. 5 residues coordinate beta-D-glucose 6-phosphate: Asp-31, Gly-79, Arg-82, Ser-157, and Asn-159. Asp-215 contributes to the Mg(2+) binding site.

The protein belongs to the HAD-like hydrolase superfamily. CbbY/CbbZ/Gph/YieH family. Monomer. It depends on Mg(2+) as a cofactor. Post-translationally, autophosphorylated.

It catalyses the reaction beta-D-glucose 1-phosphate = beta-D-glucose 6-phosphate. Functionally, catalyzes the interconversion of D-glucose 1-phosphate (G1P) and D-glucose 6-phosphate (G6P), forming beta-D-glucose 1,6-(bis)phosphate (beta-G16P) as an intermediate. The chain is Beta-phosphoglucomutase from Mycobacterium bovis (strain ATCC BAA-935 / AF2122/97).